A 603-amino-acid chain; its full sequence is DNA mismatch repair protein MutL (603 aa).

The protein belongs to the DNA mismatch repair MutL/HexB family.

This protein is involved in the repair of mismatches in DNA. It is required for dam-dependent methyl-directed DNA mismatch repair. May act as a 'molecular matchmaker', a protein that promotes the formation of a stable complex between two or more DNA-binding proteins in an ATP-dependent manner without itself being part of a final effector complex. This is DNA mismatch repair protein MutL from Rhodopseudomonas palustris (strain BisA53).